Consider the following 237-residue polypeptide: Phosphoribosylaminoimidazole-succinocarboxamide synthase (237 aa).

It belongs to the SAICAR synthetase family.

The enzyme catalyses 5-amino-1-(5-phospho-D-ribosyl)imidazole-4-carboxylate + L-aspartate + ATP = (2S)-2-[5-amino-1-(5-phospho-beta-D-ribosyl)imidazole-4-carboxamido]succinate + ADP + phosphate + 2 H(+). Its pathway is purine metabolism; IMP biosynthesis via de novo pathway; 5-amino-1-(5-phospho-D-ribosyl)imidazole-4-carboxamide from 5-amino-1-(5-phospho-D-ribosyl)imidazole-4-carboxylate: step 1/2. This is Phosphoribosylaminoimidazole-succinocarboxamide synthase from Yersinia enterocolitica serotype O:8 / biotype 1B (strain NCTC 13174 / 8081).